The following is a 144-amino-acid chain: Snake venom vascular endothelial growth factor toxin VR-1 (144 aa).

The first 24 residues, 1–24 (MAAYLLAVAILFCIQGWPSGTVQG), serve as a signal peptide directing secretion. A Pyrrolidone carboxylic acid modification is found at Q25. Disulfide bonds link C38/C80, C69/C115, and C73/C117. The segment covering 120–134 (RWKQGEPEGPKEPRR) has biased composition (basic and acidic residues). The interval 120 to 144 (RWKQGEPEGPKEPRRGGVRAKFPFD) is disordered. Residues 134-144 (RGGVRAKFPFD) constitute a propeptide that is removed on maturation.

This sequence belongs to the PDGF/VEGF growth factor family. Snake venom VEGF subfamily. As to quaternary structure, homodimer; disulfide-linked. Interacts with VEGF receptor-2 (KDR) with high affinity, but not with VEGF receptor-1 (Flt-1), VEGF receptor-3 (FLT4), and neuropilin-1 (NRP1). In terms of tissue distribution, expressed by the venom gland.

The protein resides in the secreted. Snake venom VEGFs may contribute to venom dispersion and prey subjugation by inducing vascular permeability and hypotension. This protein induces angiogenesis probably through VEGF receptor (KDR/VEGFR-2) signaling, as well as drastic hypotension. The hypotension is mediated by nitric oxide, which is produced by VEGF-activated endothelium NO synthase. May also induce vascular permeability. This Daboia russelii (Russel's viper) protein is Snake venom vascular endothelial growth factor toxin VR-1.